The following is a 115-amino-acid chain: U3-lycotoxin-Ls1r (115 aa).

Residues 1 to 20 (MKFVLLFGVLLVTLFSYSSA) form the signal peptide. A propeptide spanning residues 21–44 (EMLDDFHQADEDELVSLIKKEEAR) is cleaved from the precursor. Cystine bridges form between cysteine 48–cysteine 63, cysteine 55–cysteine 72, cysteine 62–cysteine 87, and cysteine 74–cysteine 85.

Belongs to the neurotoxin 19 (CSTX) family. 01 subfamily. In terms of tissue distribution, expressed by the venom gland.

The protein localises to the secreted. The polypeptide is U3-lycotoxin-Ls1r (Lycosa singoriensis (Wolf spider)).